The chain runs to 469 residues: Ribosomal protein uS12 methylthiotransferase RimO (469 aa).

The 111-residue stretch at 34–144 (NKIGFVSLGC…VLEHVHQFAP (111 aa)) folds into the MTTase N-terminal domain. The [4Fe-4S] cluster site is built by cysteine 43, cysteine 79, cysteine 108, cysteine 176, cysteine 180, and cysteine 183. Residues 162–399 (LTPKHYAYLK…MLVQQEISAA (238 aa)) form the Radical SAM core domain. The 67-residue stretch at 402 to 468 (QKRIGSTMKV…EYDLWGSLVR (67 aa)) folds into the TRAM domain.

This sequence belongs to the methylthiotransferase family. RimO subfamily. [4Fe-4S] cluster serves as cofactor.

It localises to the cytoplasm. It catalyses the reaction L-aspartate(89)-[ribosomal protein uS12]-hydrogen + (sulfur carrier)-SH + AH2 + 2 S-adenosyl-L-methionine = 3-methylsulfanyl-L-aspartate(89)-[ribosomal protein uS12]-hydrogen + (sulfur carrier)-H + 5'-deoxyadenosine + L-methionine + A + S-adenosyl-L-homocysteine + 2 H(+). Catalyzes the methylthiolation of an aspartic acid residue of ribosomal protein uS12. This chain is Ribosomal protein uS12 methylthiotransferase RimO, found in Vibrio vulnificus (strain YJ016).